A 30-amino-acid chain; its full sequence is Putative cytochrome bd-II ubiquinol oxidase subunit AppX (30 aa).

A helical transmembrane segment spans residues 4–24; sequence LLWFVGILLMCSLSTLVLVWL.

Belongs to the cytochrome ubiquinol oxidase subunit X family. As to quaternary structure, able to interact with CydA and CydB upon overexpression.

The protein resides in the cell inner membrane. Functionally, might be part of cytochrome bd-II oxidase (appB and appC). Able to restore reductant resistance to a cydX deletion mutant upon overexpression. CydX and this protein may have some functional overlap. In Escherichia coli (strain K12), this protein is Putative cytochrome bd-II ubiquinol oxidase subunit AppX (appX).